The primary structure comprises 76 residues: Small ribosomal subunit protein bS18 (76 aa).

The protein belongs to the bacterial ribosomal protein bS18 family. In terms of assembly, part of the 30S ribosomal subunit. Forms a tight heterodimer with protein bS6.

Functionally, binds as a heterodimer with protein bS6 to the central domain of the 16S rRNA, where it helps stabilize the platform of the 30S subunit. The protein is Small ribosomal subunit protein bS18 of Xylella fastidiosa (strain M23).